The following is a 353-amino-acid chain: Protein RecA (353 aa).

ATP is bound at residue 67–74 (GPESSGKT). The disordered stretch occupies residues 330 to 353 (SNPNSTPDFSVDDSEGVAETNEDF). Acidic residues predominate over residues 339-353 (SVDDSEGVAETNEDF).

It belongs to the RecA family.

Its subcellular location is the cytoplasm. Functionally, can catalyze the hydrolysis of ATP in the presence of single-stranded DNA, the ATP-dependent uptake of single-stranded DNA by duplex DNA, and the ATP-dependent hybridization of homologous single-stranded DNAs. It interacts with LexA causing its activation and leading to its autocatalytic cleavage. The chain is Protein RecA from Escherichia coli O157:H7 (strain EC4115 / EHEC).